Consider the following 577-residue polypeptide: 5'-AMP-activated protein kinase subunit gamma (577 aa).

The tract at residues 45–226 (QSEGVGGGEL…NNNNSNSNNN (182 aa)) is disordered. Positions 58–88 (NNNTTNNNTPTNTTTTTNTNTTTMNNSNNNN) are enriched in low complexity. 2 stretches are compositionally biased toward polar residues: residues 106–121 (SIEQ…SQDG) and 138–155 (ESQS…NNNM). The span at 165-226 (STDNKSSTNT…NNNNSNSNNN (62 aa)) shows a compositional bias: low complexity. CBS domains follow at residues 279–341 (VIPI…KKPK), 364–426 (ERPS…QLPE), 438–499 (IGTF…LSPS), and 517–574 (QRPE…DVKS).

The protein belongs to the 5'-AMP-activated protein kinase gamma subunit family.

Functionally, AMPK may be responsible for the regulation of fatty acid synthesis by phosphorylation of acetyl-CoA carboxylase. The chain is 5'-AMP-activated protein kinase subunit gamma (prkag) from Dictyostelium discoideum (Social amoeba).